A 396-amino-acid chain; its full sequence is S-adenosylmethionine synthase (396 aa).

H14 serves as a coordination point for ATP. D16 contributes to the Mg(2+) binding site. E42 serves as a coordination point for K(+). Residues E55 and Q98 each contribute to the L-methionine site. The flexible loop stretch occupies residues Q98 to K108. Residues D174 to K176, R240 to F241, D249, R255 to K256, A272, and K276 each bind ATP. D249 lines the L-methionine pocket. K280 is a binding site for L-methionine.

It belongs to the AdoMet synthase family. In terms of assembly, homotetramer; dimer of dimers. Mg(2+) serves as cofactor. Requires K(+) as cofactor.

It is found in the cytoplasm. It catalyses the reaction L-methionine + ATP + H2O = S-adenosyl-L-methionine + phosphate + diphosphate. It participates in amino-acid biosynthesis; S-adenosyl-L-methionine biosynthesis; S-adenosyl-L-methionine from L-methionine: step 1/1. In terms of biological role, catalyzes the formation of S-adenosylmethionine (AdoMet) from methionine and ATP. The overall synthetic reaction is composed of two sequential steps, AdoMet formation and the subsequent tripolyphosphate hydrolysis which occurs prior to release of AdoMet from the enzyme. This is S-adenosylmethionine synthase from Caldicellulosiruptor saccharolyticus (strain ATCC 43494 / DSM 8903 / Tp8T 6331).